A 341-amino-acid polypeptide reads, in one-letter code: L-threonine 3-dehydrogenase (341 aa).

Cysteine 38 contributes to the Zn(2+) binding site. Residues threonine 40 and histidine 43 each act as charge relay system in the active site. Zn(2+)-binding residues include histidine 63, glutamate 64, cysteine 93, cysteine 96, cysteine 99, and cysteine 107. Residues isoleucine 175, aspartate 195, arginine 200, 262–264 (LGI), and 286–287 (IY) contribute to the NAD(+) site.

The protein belongs to the zinc-containing alcohol dehydrogenase family. As to quaternary structure, homotetramer. Zn(2+) is required as a cofactor.

The protein resides in the cytoplasm. The catalysed reaction is L-threonine + NAD(+) = (2S)-2-amino-3-oxobutanoate + NADH + H(+). The protein operates within amino-acid degradation; L-threonine degradation via oxydo-reductase pathway; glycine from L-threonine: step 1/2. In terms of biological role, catalyzes the NAD(+)-dependent oxidation of L-threonine to 2-amino-3-ketobutyrate. In Yersinia pseudotuberculosis serotype O:1b (strain IP 31758), this protein is L-threonine 3-dehydrogenase.